A 371-amino-acid chain; its full sequence is UDP-N-acetylglucosamine--N-acetylmuramyl-(pentapeptide) pyrophosphoryl-undecaprenol N-acetylglucosamine transferase (371 aa).

UDP-N-acetyl-alpha-D-glucosamine is bound by residues Thr15–Gly17, Asn126, Arg172, Ser199, Ile256, Ala275–Glu280, and Gln301.

The protein belongs to the glycosyltransferase 28 family. MurG subfamily.

It localises to the cell inner membrane. The enzyme catalyses di-trans,octa-cis-undecaprenyl diphospho-N-acetyl-alpha-D-muramoyl-L-alanyl-D-glutamyl-meso-2,6-diaminopimeloyl-D-alanyl-D-alanine + UDP-N-acetyl-alpha-D-glucosamine = di-trans,octa-cis-undecaprenyl diphospho-[N-acetyl-alpha-D-glucosaminyl-(1-&gt;4)]-N-acetyl-alpha-D-muramoyl-L-alanyl-D-glutamyl-meso-2,6-diaminopimeloyl-D-alanyl-D-alanine + UDP + H(+). The protein operates within cell wall biogenesis; peptidoglycan biosynthesis. Cell wall formation. Catalyzes the transfer of a GlcNAc subunit on undecaprenyl-pyrophosphoryl-MurNAc-pentapeptide (lipid intermediate I) to form undecaprenyl-pyrophosphoryl-MurNAc-(pentapeptide)GlcNAc (lipid intermediate II). The sequence is that of UDP-N-acetylglucosamine--N-acetylmuramyl-(pentapeptide) pyrophosphoryl-undecaprenol N-acetylglucosamine transferase from Francisella tularensis subsp. holarctica (strain FTNF002-00 / FTA).